The following is an 879-amino-acid chain: Translation initiation factor IF-2 (879 aa).

The interval 48–261 (EAFPPPPEPA…RPHKSKKQRR (214 aa)) is disordered. The span at 82-111 (PAADAAAPPAVTTPPSAAPAGATTSAPSDA) shows a compositional bias: low complexity. Pro residues-rich tracts occupy residues 119–142 (PPRP…PSGP), 152–163 (SPMPRPMPPRPV), and 173–197 (PGIP…PPRP). Positions 198–213 (AAGRAAPGRGAPIRLP) are enriched in low complexity. The segment covering 228–246 (PGVGGRGRGAPGGAFGRGP) has biased composition (gly residues). Positions 251 to 260 (SRPHKSKKQR) are enriched in basic residues. The tr-type G domain occupies 372–543 (PRPPVVTVMG…AILLTADAAL (172 aa)). Residues 381 to 388 (GHVDHGKT) are G1. 381–388 (GHVDHGKT) is a GTP binding site. The segment at 406–410 (GITQH) is G2. The interval 431–434 (DTPG) is G3. GTP is bound by residues 431–435 (DTPGH) and 485–488 (NKID). Positions 485-488 (NKID) are G4. A G5 region spans residues 521 to 523 (SAL).

Belongs to the TRAFAC class translation factor GTPase superfamily. Classic translation factor GTPase family. IF-2 subfamily.

It is found in the cytoplasm. In terms of biological role, one of the essential components for the initiation of protein synthesis. Protects formylmethionyl-tRNA from spontaneous hydrolysis and promotes its binding to the 30S ribosomal subunits. Also involved in the hydrolysis of GTP during the formation of the 70S ribosomal complex. The sequence is that of Translation initiation factor IF-2 from Acidothermus cellulolyticus (strain ATCC 43068 / DSM 8971 / 11B).